A 650-amino-acid chain; its full sequence is Histone-lysine N-methyltransferase family member SUVH9 (650 aa).

2 disordered regions span residues 1–24 (MGSS…KLEP) and 95–129 (PVEE…RSSE). The segment covering 7-20 (PLDPSLNPSPSLIP) has biased composition (low complexity). The span at 107 to 118 (YSTSDSSPSVAT) shows a compositional bias: polar residues. In terms of domain architecture, YDG spans 205 to 352 (GSIPGVQVGD…FGVFKYRLER (148 aa)). In terms of domain architecture, Pre-SET spans 432 to 490 (SGCDCVNGCGSGCLCEAKNSGEIAYDYNGTLIRQKPLIHECGSACQCPPSCRNRVTQKG). The Zn(2+) site is built by C434, C436, C440, C444, C446, C472, C476, C478, and C482. One can recognise an SET domain in the interval 493–637 (NRLEVFRSLE…PMTELSLDYG (145 aa)).

Belongs to the class V-like SAM-binding methyltransferase superfamily. Histone-lysine methyltransferase family. Suvar3-9 subfamily. In terms of assembly, component of an RNA-directed DNA methylation (RdDM) complex that contains at least MORC6, MORC1/CRT1, MORC2, SWI3D and SUVH9. Interacts directly with MORC6, MORC2 and MORC1/CRT1. Interacts with SWI3B, SWI3C and SWI3D.

The protein localises to the nucleus. Its subcellular location is the chromosome. It is found in the centromere. Functionally, histone methyltransferase family member that plays a role in gene silencing. Together with MORC6 and SUVH2, regulates the silencing of some transposable elements (TEs). According to PubMed:19043555, the protein does not bind S-adenosyl-L-methionine and lacks methyltransferase activity. Instead, it may function downstream of DRM2 in RNA-directed DNA methylation, binding to methylated DNA and recruiting DNA-directed RNA polymerase V to chromatin. The protein is Histone-lysine N-methyltransferase family member SUVH9 (SUVH9) of Arabidopsis thaliana (Mouse-ear cress).